A 462-amino-acid polypeptide reads, in one-letter code: Argininosuccinate lyase (462 aa).

Belongs to the lyase 1 family. Argininosuccinate lyase subfamily.

It localises to the cytoplasm. It catalyses the reaction 2-(N(omega)-L-arginino)succinate = fumarate + L-arginine. It functions in the pathway amino-acid biosynthesis; L-arginine biosynthesis; L-arginine from L-ornithine and carbamoyl phosphate: step 3/3. The polypeptide is Argininosuccinate lyase (Exiguobacterium sp. (strain ATCC BAA-1283 / AT1b)).